We begin with the raw amino-acid sequence, 506 residues long: Parthenolide synthase (506 aa).

Residues L10–I30 form a helical membrane-spanning segment. 5 N-linked (GlcNAc...) asparagine glycosylation sites follow: N32, N63, N121, N168, and N175. The helical transmembrane segment at L301 to M321 threads the bilayer. Residue C448 participates in heme binding.

Belongs to the cytochrome P450 family.

Its subcellular location is the membrane. It catalyses the reaction (+)-costunolide + reduced [NADPH--hemoprotein reductase] + O2 = parthenolide + oxidized [NADPH--hemoprotein reductase] + H2O + H(+). The protein operates within secondary metabolite biosynthesis; terpenoid biosynthesis. Functionally, involved in the biosynthesis of germacrene-derived sesquiterpene lactones. Component of the parthenolide biosynthetic pathway; parthenolide and conjugates are promising anti-cancer drugs highly active against colon cancer cells. Catalyzes the conversion of costunolide to parthenolide. In Tanacetum parthenium (Feverfew), this protein is Parthenolide synthase.